Consider the following 79-residue polypeptide: Transcriptional regulator SplA (79 aa).

Regulator of the spore photoproduct lyase operon (splAB). This is Transcriptional regulator SplA (splA) from Bacillus subtilis (strain 168).